The sequence spans 151 residues: Protein-export protein SecB (151 aa).

The protein belongs to the SecB family. As to quaternary structure, homotetramer, a dimer of dimers. One homotetramer interacts with 1 SecA dimer.

It localises to the cytoplasm. Its function is as follows. One of the proteins required for the normal export of preproteins out of the cell cytoplasm. It is a molecular chaperone that binds to a subset of precursor proteins, maintaining them in a translocation-competent state. It also specifically binds to its receptor SecA. The sequence is that of Protein-export protein SecB from Azoarcus sp. (strain BH72).